The following is a 191-amino-acid chain: MNTELKILMAGVDEVGRGPLAGAVVTAAVILKKPIDGLTDSKKLSPKQRNLLAIRIKEEALAFAYGRAEVEEIDQLNIHHATLLAMRRAVEALPIQPDNVVVDGAFTPQLNIPCKAIVQGDSLIPEISAASILAKVLRDEEMVALDKIYPGYGFAEHKGYATPVHKEALMRLGPCKIHRRSYSPVADLISK.

Residues isoleucine 7 to lysine 191 enclose the RNase H type-2 domain. Residues aspartate 13, glutamate 14, and aspartate 103 each coordinate a divalent metal cation.

It belongs to the RNase HII family. Requires Mn(2+) as cofactor. Mg(2+) is required as a cofactor.

The protein resides in the cytoplasm. It catalyses the reaction Endonucleolytic cleavage to 5'-phosphomonoester.. Endonuclease that specifically degrades the RNA of RNA-DNA hybrids. The protein is Ribonuclease HII of Legionella pneumophila (strain Paris).